Consider the following 602-residue polypeptide: Elongation factor 4 (602 aa).

The region spanning 6–188 (DRIRNFCIIA…RIVTRIPPPG (183 aa)) is the tr-type G domain. Residues 18–23 (DHGKST) and 135–138 (NKID) contribute to the GTP site.

Belongs to the TRAFAC class translation factor GTPase superfamily. Classic translation factor GTPase family. LepA subfamily.

It localises to the cell membrane. It carries out the reaction GTP + H2O = GDP + phosphate + H(+). In terms of biological role, required for accurate and efficient protein synthesis under certain stress conditions. May act as a fidelity factor of the translation reaction, by catalyzing a one-codon backward translocation of tRNAs on improperly translocated ribosomes. Back-translocation proceeds from a post-translocation (POST) complex to a pre-translocation (PRE) complex, thus giving elongation factor G a second chance to translocate the tRNAs correctly. Binds to ribosomes in a GTP-dependent manner. The chain is Elongation factor 4 from Pelotomaculum thermopropionicum (strain DSM 13744 / JCM 10971 / SI).